Here is a 144-residue protein sequence, read N- to C-terminus: Large ribosomal subunit protein uL11 (144 aa).

It belongs to the universal ribosomal protein uL11 family. In terms of assembly, part of the ribosomal stalk of the 50S ribosomal subunit. Interacts with L10 and the large rRNA to form the base of the stalk. L10 forms an elongated spine to which L12 dimers bind in a sequential fashion forming a multimeric L10(L12)X complex. One or more lysine residues are methylated.

In terms of biological role, forms part of the ribosomal stalk which helps the ribosome interact with GTP-bound translation factors. This is Large ribosomal subunit protein uL11 from Deinococcus geothermalis (strain DSM 11300 / CIP 105573 / AG-3a).